The sequence spans 398 residues: Elongation factor Tu (398 aa).

The tr-type G domain occupies 10 to 207 (KPHVNIGTIG…TVDEYIPEPE (198 aa)). The tract at residues 19 to 26 (GHVDHGKT) is G1. 19-26 (GHVDHGKT) is a GTP binding site. Thr26 contacts Mg(2+). Residues 63–67 (GITIN) form a G2 region. The G3 stretch occupies residues 84–87 (DAPG). GTP is bound by residues 84–88 (DAPGH) and 139–142 (NKVD). The interval 139-142 (NKVD) is G4. A G5 region spans residues 177-179 (SAL).

The protein belongs to the TRAFAC class translation factor GTPase superfamily. Classic translation factor GTPase family. EF-Tu/EF-1A subfamily. In terms of assembly, monomer.

Its subcellular location is the cytoplasm. The enzyme catalyses GTP + H2O = GDP + phosphate + H(+). In terms of biological role, GTP hydrolase that promotes the GTP-dependent binding of aminoacyl-tRNA to the A-site of ribosomes during protein biosynthesis. The chain is Elongation factor Tu from Streptococcus agalactiae serotype Ia (strain ATCC 27591 / A909 / CDC SS700).